The sequence spans 705 residues: Translation initiation factor IF-2 (705 aa).

The interval 40-124 (DDQIKALDKK…QPAAPKEIPS (85 aa)) is disordered. The segment covering 41-58 (DQIKALDKKFKKEQKNDN) has biased composition (basic and acidic residues). Over residues 59–77 (KQSTQNNHQKSNNQNQNKG) the composition is skewed to low complexity. Residues 94-108 (KGNKKNNRNNKKNNK) are compositionally biased toward basic residues. The tr-type G domain maps to 207–376 (ERPAVVTIMG…GLVAEVQELK (170 aa)). Positions 216-223 (GHVDHGKT) are G1. 216-223 (GHVDHGKT) is a binding site for GTP. The interval 241-245 (GITQH) is G2. The G3 stretch occupies residues 262–265 (DTPG). GTP is bound by residues 262–266 (DTPGH) and 316–319 (NKID). Residues 316–319 (NKID) form a G4 region. Positions 352–354 (SAL) are G5.

Belongs to the TRAFAC class translation factor GTPase superfamily. Classic translation factor GTPase family. IF-2 subfamily.

It localises to the cytoplasm. Functionally, one of the essential components for the initiation of protein synthesis. Protects formylmethionyl-tRNA from spontaneous hydrolysis and promotes its binding to the 30S ribosomal subunits. Also involved in the hydrolysis of GTP during the formation of the 70S ribosomal complex. This is Translation initiation factor IF-2 from Staphylococcus aureus (strain MRSA252).